The sequence spans 272 residues: Tumor necrosis factor receptor superfamily member 4 (272 aa).

Positions 1–19 (MYVWVQQPTALLLLALTLG) are cleaved as a signal peptide. Residues 20–211 (VTARRLNCVK…PPTLVTPEGP (192 aa)) lie on the Extracellular side of the membrane. TNFR-Cys repeat units lie at residues 26–61 (NCVKHTYPSGHKCCRECQPGHGMVSRCDHTRDTLCH) and 62–103 (PCET…DTVC). Cystine bridges form between cysteine 27–cysteine 38, cysteine 39–cysteine 52, cysteine 42–cysteine 60, cysteine 63–cysteine 77, cysteine 80–cysteine 95, cysteine 83–cysteine 103, cysteine 105–cysteine 123, and cysteine 126–cysteine 139. The stretch at 104–124 (RCRPGTQPRQDSGYKLGVDCV) is one TNFR-Cys 3; truncated repeat. The stretch at 125–165 (PCPPGHFSPGNNQACKPWTNCTLSGKQTRHPASDSLDAVCE) is one TNFR-Cys 4 repeat. An N-linked (GlcNAc...) asparagine glycan is attached at asparagine 144. An intrachain disulfide couples cysteine 145 to cysteine 164. The chain crosses the membrane as a helical span at residues 212–236 (AFAVLLGLGLGLLAPLTVLLALYLL). Residues 237 to 272 (RKAWRLPNTPKPCWGNSFRTPIQEEHTDAHFTLAKI) lie on the Cytoplasmic side of the membrane.

Interacts with TRAF2, TRAF3 and TRAF5. Expressed in CD4(+) T-cells and in T-helper Th17 cells (at protein level).

It localises to the membrane. Functionally, receptor for TNFSF4/OX40L/GP34. Is a costimulatory molecule implicated in long-term T-cell immunity. In Mus musculus (Mouse), this protein is Tumor necrosis factor receptor superfamily member 4 (Tnfrsf4).